Here is a 315-residue protein sequence, read N- to C-terminus: DNA-directed RNA polymerase subunit alpha (315 aa).

Residues Met1–Ser228 form an alpha N-terminal domain (alpha-NTD) region. Residues Lys245–Asp315 are alpha C-terminal domain (alpha-CTD).

It belongs to the RNA polymerase alpha chain family. Homodimer. The RNAP catalytic core consists of 2 alpha, 1 beta, 1 beta' and 1 omega subunit. When a sigma factor is associated with the core the holoenzyme is formed, which can initiate transcription.

The enzyme catalyses RNA(n) + a ribonucleoside 5'-triphosphate = RNA(n+1) + diphosphate. In terms of biological role, DNA-dependent RNA polymerase catalyzes the transcription of DNA into RNA using the four ribonucleoside triphosphates as substrates. The chain is DNA-directed RNA polymerase subunit alpha from Acetivibrio thermocellus (strain ATCC 27405 / DSM 1237 / JCM 9322 / NBRC 103400 / NCIMB 10682 / NRRL B-4536 / VPI 7372) (Clostridium thermocellum).